A 167-amino-acid polypeptide reads, in one-letter code: Intermembrane phospholipid transport system binding protein MlaD (167 aa).

Over 1–6 (MRQTIK) the chain is Cytoplasmic. Residues 7–27 (YEFWVGLFLLLGIGALVFLGL) form a helical; Signal-anchor for type II membrane protein membrane-spanning segment. Topologically, residues 28–167 (RVANVQGFAE…GNEKSESTEQ (140 aa)) are periplasmic. The tract at residues 40 to 118 (SYTVTATFDN…GEQYIALTMG (79 aa)) is MCE/MlaD.

This sequence belongs to the MlaD family. As to quaternary structure, the complex is composed of two ATP-binding proteins (MlaF), two transmembrane proteins (MlaE), two cytoplasmic solute-binding proteins (MlaB) and six periplasmic solute-binding proteins (MlaD).

It localises to the cell inner membrane. Functionally, part of the ABC transporter complex MlaFEDB, which is involved in a phospholipid transport pathway that maintains lipid asymmetry in the outer membrane by retrograde trafficking of phospholipids from the outer membrane to the inner membrane. MlaD functions in substrate binding with strong affinity for phospholipids and modulates ATP hydrolytic activity of the complex. This chain is Intermembrane phospholipid transport system binding protein MlaD, found in Haemophilus influenzae (strain ATCC 51907 / DSM 11121 / KW20 / Rd).